The sequence spans 615 residues: DNA mismatch repair protein MutL (615 aa).

The tract at residues 362 to 397 (HFAEPAVREPVAPRYTPAPASGSRPAAPWPNAQPGY) is disordered. The segment covering 378-391 (PAPASGSRPAAPWP) has biased composition (low complexity).

It belongs to the DNA mismatch repair MutL/HexB family.

This protein is involved in the repair of mismatches in DNA. It is required for dam-dependent methyl-directed DNA mismatch repair. May act as a 'molecular matchmaker', a protein that promotes the formation of a stable complex between two or more DNA-binding proteins in an ATP-dependent manner without itself being part of a final effector complex. The polypeptide is DNA mismatch repair protein MutL (Escherichia coli O17:K52:H18 (strain UMN026 / ExPEC)).